A 1527-amino-acid chain; its full sequence is Lysophospholipase nte1 (1527 aa).

Over 1 to 69 the chain is Cytoplasmic; that stretch reads MADDGGPFPL…PPPAPSTMVG (69 aa). Residues 70-90 form a helical membrane-spanning segment; sequence WIGWVFSFVFQVIPSILYWAI. The Lumenal segment spans residues 91-112; the sequence is TFCTITLPTWLFTLFSMSLTFT. The helical transmembrane segment at 113-133 threads the bilayer; the sequence is MNFTTLLLIALAIVSTVSWFI. The Cytoplasmic segment spans residues 134–1527; it reads RYRFLNMYSR…RTLAPRRASI (1394 aa). 4 disordered regions span residues 240–259, 299–387, 576–596, and 750–785; these read ADHELNLAGDDSTDEEGQNV, LSSS…HPDI, EKEQSPFRPPTMRGPASPFHR, and AHGEEAFPTLKRTTTASSRTSSVAPGGSDSKRRRQS. Positions 355–373 are enriched in basic and acidic residues; sequence HLEESRGTPDHDHQPESRT. A nucleoside 3',5'-cyclic phosphate is bound by residues 685–804 and 846–966; these read GGTS…VGSV and RLTS…IAQR. Low complexity predominate over residues 761-771; the sequence is RTTTASSRTSS. The region spanning 1224–1388 is the PNPLA domain; that stretch reads LVLGGGGARG…IDNLTVPHMK (165 aa). The short motif at 1228 to 1233 is the GXGXXG element; that stretch reads GGGARG. Residues 1255–1259 carry the GXSXG motif; it reads GTSIG. Serine 1257 (nucleophile) is an active-site residue. Residue aspartate 1375 is the Proton acceptor of the active site. The DGA/G signature appears at 1375 to 1377; sequence DGG.

This sequence belongs to the NTE family.

The protein localises to the endoplasmic reticulum membrane. The catalysed reaction is a 1-acyl-sn-glycero-3-phosphocholine + H2O = sn-glycerol 3-phosphocholine + a fatty acid + H(+). With respect to regulation, inhibited by organophosphorus esters. Functionally, intracellular phospholipase B that catalyzes the double deacylation of phosphatidylcholine (PC) to glycerophosphocholine (GroPCho). Plays an important role in membrane lipid homeostasis. Responsible for the rapid PC turnover in response to inositol, elevated temperatures, or when choline is present in the growth medium. In Aspergillus terreus (strain NIH 2624 / FGSC A1156), this protein is Lysophospholipase nte1 (nte1).